The sequence spans 2483 residues: MRAVQLGPVPSGPRVALLPPLLLLLLLAAAGSAQAQAVDLDALCSYTWEAVDSKNNAVYKINVCGNVGISSCGPTSAICMCDLKTENCRSVGDSLLRSSARSLLEFNTTMGCQPSDSQHRIQTSITFLCGKTLGTPEFVTATDCVHYFEWRTTAACKKDIFKADKEVPCYAFDDKLQKHDLNPLIKLNGGYLVDDSDPDTSLFINVCRDIDSLRDPSTQLRVCPAGTAACLLKGNQAFDVGRPKEGLKLLSKDRLVLTYVKEEGEKPDFCNGHSPAVTVTFVCPSERREGTIPKLTAKSNCRYEVEWITEYACHRDYLQSESCSLSSEQHDITIDLSPLAQYGGSPYVSDGREYTFFINVCGDTKVSLCNNKEAAVCQEKKADSTQVKIAGRHQNQTLRYSDGDLTLIYSGGDECSSGFQRMSVINFECNKTAGKDGRGEPVFTGEVDCTYFFTWDTKYACIKEKEDLLCGAINGKKRYDLSVLARHSESEQNWEAVDGSQAESEKYFFINVCHRVLQEGKARNCPEDAAVCAVDKNGSKNLGKFVSSPTKEKGHIQLSYTDGDDCGSDKKISTNITLVCKPGDLESAPVLRAARSDGCFYEFEWHTAAACVLSKTEGENCTVLDAQAGFSFDLSLLTKKNGAYKVETEKYDFYINVCGPVSMDPCQSNSGACQVAKSGKSWNLGLSSTKLTYYDGMIQLSYRNGTPYNNEKHTPRATLITFLCDRDAGVGFPEYQEEDNSTYNFRWYTSYACPEEPLECMVTDPSMMEQYDLSSLVKSEGGSGGNWYAMENSREHVTRRKYYLNVCRPLNPVPGCDRYASACQMKYENHEGSLAETVSISNLGVAKIGPVVEESGSLLLEYVNGSACTTSDGQLTTYSTRIHLVCGRGFMNSHPIFTFNWECVVSFLWNTEAACPIQTITETDQACSIRDPSSGFVFNLSPLNDSAQGHVVLGIGKTFVFNICGAMPACGTVAGKPAYGCEAETQIEDIKDLRPQRPVGMERSLQLSAEGFLTLTYKGSSPSDRGTAFIIRFICNDDIYPGAPKFLHQDIDSTRGIRNTYFEFETALACTPSLVDCQVTDPAGNEYDLSALSMVRKPWTAVDTSAYGKRRHFYLSVCNPLPYIPGCHGIALGSCMVSEDNSFNLGVVQISPQATGNGSLSILYVNGDRCGDQRFSTRIVFECAQTSGSPMFQFVNNCEYVFVWRTVEACPVIREEGDNCQVKDPRHGNLYDLKPLGLNDTIVSVGEYTYYLRVCGKLSSDVCSAHDGSKAVSSCQEKKGPQGFQKVAGLLSQKLTFENGLLKMNYTGGDTCHKVYQRSTTIYFYCDRTTQKPVFLKETSDCSYMFEWRTQYACPPFNVTECSVQDAAGNSIDLSSLSRYSDNWEAVTRTGATEHYLINVCKSLSPHAGTEPCPPEAAVCLLNGSKPVNLGKVRDGPQWTDGVTVLQYVDGDLCPDKIRRRSTIIRFTCSDNQVNSRPLFISAVQDCEYTFSWPTPSACPVKSNTHDDCQVTNPSTGHLFDLSSLSGRAGINASYSEKGLVFMSICEENENCGPGVGACFGQTRISVGKASKRLSYKDQVLQLVYENGSPCPSLSDLRYKSVISFVCRPEAGPTNRPMLISLDKQTCTLFFSWHTPLACEQATECTVRNGSSIIDLSPLIHRTGGYEAYDESEDDTSDTTPDFYINICQPLNPMHGVPCPAGASVCKVPVDGPPIDIGRVTGPPIFNPVANEVYLNFESSTHCLADRYMNYTSLITFHCKRGVSMGTPKLIRTNDCDFVFEWETPIVCPDEVKTQGCAVTDEQLLYSFNLTSLSTSTFKVTRDARTYSIGVCTAAAGLGQEGCKDGGVCLLSGNKGASFGRLASMQLDYRHQDEAVILSYVNGDPCPPETDDGEPCVFPFIYKGKSYDECVLEGRAKLWCSKTANYDRDHEWGFCRQTNSYRMSAIIFTCDESEDIGRPQVFSEDRGCEVTFEWKTKVVCPPKKMECKFVQKHKTYDLRLLSSLTGSWDFVHEGNSYFINLCQRVYKGPLDCSERASICKKSATGQVQVLGLVHTQKLEVIDETVIVTYSKGYPCGGNKTASSVIELTCAKTVGRPAFKRFDSVSCTYYFYWYSRAACAVRPQEVTMVNGTLTNPVTGKSFSLGEIYFKLFSASGDMRTNGDNYLYEIQLSSITSSSYPACAGANICQVKPNDQHFSRKVGTSDMTKYYVQDGDLDVVFTSSSKCGKDKTKSVSSTIFFHCDPLVKDGIPEFSHETADCQYLFSWYTSAVCPLGVDFEDESAGPEYKGLSERSQAVGAVLSLLLVALTGCLLALLLHKKERRETVINKLTSCCRRSSGVSYKYSKVSKEEETDENETEWLMEEIQVPAPRLGKDGQENGHITTKAVKAEALSSLHGDDQDSEDEVLTVPEVKVHSGRGAEVESSQPLRNPQRKVLKEREGERLGLVRGEKARKGKFRPGQRKPTAPAKLVSFHDDSDEDLLHI.

An N-terminal signal peptide occupies residues Met-1–Ala-35. Residues Gln-36 to Ala-2295 lie on the Lumenal side of the membrane. MRH domains are found at residues Ala-42–Lys-158, Val-167–Arg-315, Glu-321–Lys-463, Leu-468–Leu-613, Glu-619–Glu-755, Leu-758–Ile-917, Gln-925–Pro-1072, Val-1075–Val-1212, and Asp-1218–Pro-1356. Disulfide bonds link Cys-44–Cys-64 and Cys-72–Cys-79. Asn-107 carries an N-linked (GlcNAc...) asparagine glycan. Intrachain disulfides connect Cys-112-Cys-144, Cys-129-Cys-156, Cys-169-Cys-207, Cys-223-Cys-230, Cys-270-Cys-301, Cys-283-Cys-313, Cys-323-Cys-361, and Cys-369-Cys-377. Residues Asn-395 and Asn-430 are each glycosylated (N-linked (GlcNAc...) asparagine). Disulfide bonds link Cys-415–Cys-449, Cys-429–Cys-461, Cys-470–Cys-513, and Cys-525–Cys-532. Asn-537 and Asn-575 each carry an N-linked (GlcNAc...) asparagine glycan. Disulfide bonds link Cys-566–Cys-599 and Cys-580–Cys-611. Residue Asn-620 is glycosylated (N-linked (GlcNAc...) asparagine). Cystine bridges form between Cys-621–Cys-658, Cys-666–Cys-673, Cys-724–Cys-753, Cys-760–Cys-807, and Cys-816–Cys-823. N-linked (GlcNAc...) asparagine glycosylation is present at Asn-740. Residue Asn-864 is glycosylated (N-linked (GlcNAc...) asparagine). 7 cysteine pairs are disulfide-bonded: Cys-868–Cys-903, Cys-886–Cys-915, Cys-927–Cys-964, Cys-970–Cys-981, Cys-1035–Cys-1070, Cys-1077–Cys-1118, and Cys-1127–Cys-1135. Residue Asn-944 is glycosylated (N-linked (GlcNAc...) asparagine). An N-linked (GlcNAc...) asparagine glycan is attached at Asn-1157. 4 disulfides stabilise this stretch: Cys-1170/Cys-1198, Cys-1183/Cys-1210, Cys-1220/Cys-1255, and Cys-1263/Cys-1275. The N-linked (GlcNAc...) asparagine glycan is linked to Asn-1239. N-linked (GlcNAc...) asparagine glycosylation is present at Asn-1305. 2 disulfide bridges follow: Cys-1312–Cys-1342 and Cys-1326–Cys-1354. Residue Asn-1358 is glycosylated (N-linked (GlcNAc...) asparagine). MRH domains lie at Thr-1360–Val-1501, Asp-1507–Gln-1641, Thr-1643–Asp-1790, Gln-1795–Pro-1982, Met-1985–Val-2120, and Val-2128–Leu-2273. Cystine bridges form between Cys-1362–Cys-1401 and Cys-1413–Cys-1420. N-linked (GlcNAc...) asparagine glycosylation is present at Asn-1423. 20 disulfides stabilise this stretch: Cys-1454-Cys-1487, Cys-1469-Cys-1499, Cys-1509-Cys-1546, Cys-1552-Cys-1559, Cys-1591-Cys-1627, Cys-1607-Cys-1639, Cys-1645-Cys-1688, Cys-1699-Cys-1706, Cys-1743-Cys-1776, Cys-1759-Cys-1788, Cys-1797-Cys-1832, Cys-1843-Cys-1849, Cys-1886-Cys-1968, Cys-1896-Cys-1920, Cys-1910-Cys-1935, Cys-1950-Cys-1980, Cys-1987-Cys-2022, Cys-2032-Cys-2039, Cys-2075-Cys-2106, and Cys-2089-Cys-2118. A glycan (N-linked (GlcNAc...) asparagine) is linked at Asn-1532. Asn-1649 carries an N-linked (GlcNAc...) asparagine glycan. N-linked (GlcNAc...) asparagine glycosylation occurs at Asn-1750. N-linked (GlcNAc...) asparagine glycosylation is present at Asn-1809. Positions Asp-1891 to Gln-1937 constitute a Fibronectin type-II domain. Residue Asn-2078 is glycosylated (N-linked (GlcNAc...) asparagine). A glycan (N-linked (GlcNAc...) asparagine) is linked at Asn-2129. Cystine bridges form between Cys-2181–Cys-2187, Cys-2225–Cys-2259, and Cys-2241–Cys-2271. A helical transmembrane segment spans residues Val-2296–Leu-2316. The Cytoplasmic portion of the chain corresponds to His-2317–Ile-2483. Lys-2342 bears the N6-acetyllysine mark. The residue at position 2401 (Ser-2401) is a Phosphoserine. The interval Ser-2415 to Ile-2483 is disordered. The residue at position 2417 (Arg-2417) is an Omega-N-methylarginine. Composition is skewed to basic and acidic residues over residues Val-2434 to Ala-2451 and Ser-2471 to Ile-2483. Residues Ser-2471 and Ser-2476 each carry the phosphoserine modification.

Belongs to the MRL1/IGF2R family. Binds HA-I and HA-II plasma membrane adapters. Interacts with DPP4; the interaction is direct. Binds GGA1, GGA2 and GGA3. Interacts with the heterotrimeric retromer cargo-selective complex (CSC), formed by VPS26 (VPS26A or VPS26B), VPS29 and VPS35; which is involved in retrograde trafficking of the receptor from endosomes to the Golgi apparatus. Palmitoylated. Undergoes cysteine S-palmitoylation which promotes interaction with the retromer cargo-selective complex which mediates its retrograde trafficking to the Golgi apparatus.

Its subcellular location is the golgi apparatus membrane. It is found in the endosome membrane. In terms of biological role, mediates the transport of phosphorylated lysosomal enzymes from the Golgi complex and the cell surface to lysosomes. Lysosomal enzymes bearing phosphomannosyl residues bind specifically to mannose-6-phosphate receptors in the Golgi apparatus and the resulting receptor-ligand complex is transported to an acidic prelysosomal compartment where the low pH mediates the dissociation of the complex. The receptor is then recycled back to the Golgi for another round of trafficking through its binding to the retromer. This receptor also binds IGF2. Acts as a positive regulator of T-cell coactivation by binding DPP4. The protein is Cation-independent mannose-6-phosphate receptor (Igf2r) of Mus musculus (Mouse).